Consider the following 312-residue polypeptide: Isethionate sulfite-lyase activating enzyme (312 aa).

Residues 20-304 (HDGPGIRTIV…GLQKTALDIL (285 aa)) form the Radical SAM core domain. 11 residues coordinate [4Fe-4S] cluster: Cys-34, Cys-38, Cys-41, Cys-60, Cys-66, Cys-69, Cys-73, Cys-93, Cys-96, Cys-100, and Cys-104. 40 to 42 (WCS) contributes to the S-adenosyl-L-methionine binding site. 4Fe-4S ferredoxin-type domains are found at residues 51 to 83 (AELACNPGRCIDISKCGHCLTACPHGAITCGDD) and 84 to 115 (DKPRIDRSHCADCSIPCAEVCPAQGLLVYGKK). S-adenosyl-L-methionine contacts are provided by residues Gly-144, 193-195 (DIK), and His-267.

This sequence belongs to the organic radical-activating enzymes family. As to quaternary structure, monomer. [4Fe-4S] cluster is required as a cofactor.

It carries out the reaction glycyl-[protein] + reduced [flavodoxin] + S-adenosyl-L-methionine = glycin-2-yl radical-[protein] + semiquinone [flavodoxin] + 5'-deoxyadenosine + L-methionine + H(+). Its pathway is organosulfur degradation; alkanesulfonate degradation. Functionally, involved in an anaerobic respiration pathway that converts the sulfonate isethionate (2-hydroxyethanesulfonate) to ammonia, acetate and sulfide. Catalyzes activation of the isethionate sulfite-lyase IslA under anaerobic conditions by generation of an organic free radical on a glycine residue, via a homolytic cleavage of S-adenosyl-L-methionine (SAM). The polypeptide is Isethionate sulfite-lyase activating enzyme (Desulfovibrio desulfuricans (strain ATCC 27774 / DSM 6949 / MB)).